The sequence spans 674 residues: Death-associated protein kinase related (674 aa).

Positions 37–295 constitute a Protein kinase domain; the sequence is EVEQTPFARG…ATGCLDHIWL (259 aa). Residues 43 to 51 and Lys-66 contribute to the ATP site; that span reads FARGKFAAV. Residue Asp-160 is the Proton acceptor of the active site. 4 disordered regions span residues 308–388, 412–440, 511–583, and 614–650; these read QPQS…GGSI, TLTS…SDKE, DSSG…TSGS, and TSSA…HHHV. Acidic residues predominate over residues 312 to 343; sequence DAEEEEEEDVDDDVEDEEEEEQVEEEEEETQN. The span at 352–363 shows a compositional bias: low complexity; sequence PQQQQQPVQQHQ. A compositionally biased stretch (basic residues) spans 373-382; that stretch reads KPTHNGHHRA. Residues Ser-384, Ser-387, Ser-435, Ser-437, and Ser-521 each carry the phosphoserine modification. Over residues 512 to 525 the composition is skewed to low complexity; that stretch reads SSGSAVARRSGGAV. Polar residues-rich tracts occupy residues 526-541 and 555-564; these read TSSS…SVRL and YKKQTSQNGC. Low complexity-rich tracts occupy residues 565–583 and 614–631; these read SSTS…TSGS and TSSA…TSAA. The span at 632–650 shows a compositional bias: basic residues; that stretch reads HHLHHHHMHHHHHHHHHHV.

Belongs to the protein kinase superfamily. Ser/Thr protein kinase family.

It catalyses the reaction L-seryl-[protein] + ATP = O-phospho-L-seryl-[protein] + ADP + H(+). The enzyme catalyses L-threonyl-[protein] + ATP = O-phospho-L-threonyl-[protein] + ADP + H(+). The sequence is that of Death-associated protein kinase related (Drak) from Drosophila melanogaster (Fruit fly).